Consider the following 344-residue polypeptide: Heat-inducible transcription repressor HrcA (344 aa).

This sequence belongs to the HrcA family.

Its function is as follows. Negative regulator of class I heat shock genes (grpE-dnaK-dnaJ and groELS operons). Prevents heat-shock induction of these operons. This is Heat-inducible transcription repressor HrcA from Aster yellows witches'-broom phytoplasma (strain AYWB).